We begin with the raw amino-acid sequence, 94 residues long: Neurotoxin 213 (94 aa).

A signal peptide spans methionine 1–cysteine 22. Positions lysine 24–lysine 88 constitute an LCN-type CS-alpha/beta domain. Disulfide bonds link cysteine 39/cysteine 62, cysteine 48/cysteine 67, and cysteine 52/cysteine 69.

Belongs to the long (3 C-C) scorpion toxin superfamily. Expressed by the venom gland.

It localises to the secreted. The polypeptide is Neurotoxin 213 (Lychas mucronatus (Chinese swimming scorpion)).